The sequence spans 291 residues: ATP phosphoribosyltransferase (291 aa).

It belongs to the ATP phosphoribosyltransferase family. Long subfamily. Mg(2+) serves as cofactor.

The protein resides in the cytoplasm. It catalyses the reaction 1-(5-phospho-beta-D-ribosyl)-ATP + diphosphate = 5-phospho-alpha-D-ribose 1-diphosphate + ATP. The protein operates within amino-acid biosynthesis; L-histidine biosynthesis; L-histidine from 5-phospho-alpha-D-ribose 1-diphosphate: step 1/9. With respect to regulation, feedback inhibited by histidine. Its function is as follows. Catalyzes the condensation of ATP and 5-phosphoribose 1-diphosphate to form N'-(5'-phosphoribosyl)-ATP (PR-ATP). Has a crucial role in the pathway because the rate of histidine biosynthesis seems to be controlled primarily by regulation of HisG enzymatic activity. This chain is ATP phosphoribosyltransferase, found in Desulfosudis oleivorans (strain DSM 6200 / JCM 39069 / Hxd3) (Desulfococcus oleovorans).